The chain runs to 304 residues: tRNA dimethylallyltransferase (304 aa).

Residue 2–9 (GPTASGKT) coordinates ATP. 4–9 (TASGKT) serves as a coordination point for substrate. Interaction with substrate tRNA regions lie at residues 27–30 (DSAL), 151–155 (QRINR), 232–237 (RCVGYR), and 265–272 (KRQITWLR).

Belongs to the IPP transferase family. As to quaternary structure, monomer. Mg(2+) is required as a cofactor.

It catalyses the reaction adenosine(37) in tRNA + dimethylallyl diphosphate = N(6)-dimethylallyladenosine(37) in tRNA + diphosphate. Functionally, catalyzes the transfer of a dimethylallyl group onto the adenine at position 37 in tRNAs that read codons beginning with uridine, leading to the formation of N6-(dimethylallyl)adenosine (i(6)A). The chain is tRNA dimethylallyltransferase from Actinobacillus pleuropneumoniae serotype 7 (strain AP76).